The primary structure comprises 116 residues: Large ribosomal subunit protein bL19 (116 aa).

Belongs to the bacterial ribosomal protein bL19 family.

This protein is located at the 30S-50S ribosomal subunit interface and may play a role in the structure and function of the aminoacyl-tRNA binding site. This chain is Large ribosomal subunit protein bL19, found in Chloroflexus aurantiacus (strain ATCC 29366 / DSM 635 / J-10-fl).